The sequence spans 223 residues: Adenylate kinase 4, mitochondrial (223 aa).

15-20 (GSGKGT) lines the a ribonucleoside 5'-triphosphate pocket. The segment at 35–64 (SSGHFLRENIKASTEVGEMAKQYIEKSLLV) is NMP. The AMP site is built by Ser-36 and Arg-41. At Lys-60 the chain carries N6-succinyllysine. Residues 62–64 (LLV), 89–92 (GFPR), and Gln-96 each bind AMP. Positions 125 to 162 (RRWIHPPSGRVYNLDFNPPHVHGIDDVTGEPLVQQEDD) are LID. A ribonucleoside 5'-triphosphate is bound by residues Arg-126 and 135-136 (VY). An AMP-binding site is contributed by Arg-170. Lys-175 bears the N6-acetyllysine mark. Lys-179 and Lys-186 each carry N6-acetyllysine; alternate. 2 positions are modified to N6-succinyllysine; alternate: Lys-179 and Lys-186. Position 199 (Thr-199) interacts with a ribonucleoside 5'-triphosphate.

It belongs to the adenylate kinase family. AK3 subfamily. In terms of assembly, monomer. Interacts with SLC25A5/ANT2. In terms of tissue distribution, highly expressed in kidney, moderately expressed in heart and liver and weakly expressed in brain.

Its subcellular location is the mitochondrion matrix. It catalyses the reaction a ribonucleoside 5'-phosphate + ATP = a ribonucleoside 5'-diphosphate + ADP. It carries out the reaction AMP + ATP = 2 ADP. The enzyme catalyses GTP + AMP = GDP + ADP. The catalysed reaction is CMP + ATP = CDP + ADP. It catalyses the reaction GTP + CMP = CDP + GDP. It carries out the reaction dAMP + ATP = dADP + ADP. The enzyme catalyses dCMP + ATP = dCDP + ADP. The catalysed reaction is a 2'-deoxyribonucleoside 5'-diphosphate + ATP = a 2'-deoxyribonucleoside 5'-triphosphate + ADP. It catalyses the reaction a ribonucleoside 5'-diphosphate + ATP = a ribonucleoside 5'-triphosphate + ADP. It carries out the reaction GDP + ATP = GTP + ADP. The enzyme catalyses CDP + GTP = CTP + GDP. The catalysed reaction is CDP + ATP = CTP + ADP. It catalyses the reaction UDP + ATP = UTP + ADP. It carries out the reaction GTP + UDP = UTP + GDP. The enzyme catalyses dADP + GTP = dATP + GDP. The catalysed reaction is dCDP + GTP = dCTP + GDP. It catalyses the reaction dCDP + ATP = dCTP + ADP. It carries out the reaction dGDP + ATP = dGTP + ADP. The enzyme catalyses dTDP + GTP = dTTP + GDP. The catalysed reaction is dTDP + ATP = dTTP + ADP. Broad-specificity mitochondrial nucleoside phosphate kinase involved in cellular nucleotide homeostasis by catalyzing nucleoside-phosphate interconversions. Similar to other adenylate kinases, preferentially catalyzes the phosphorylation of the nucleoside monophosphate AMP with ATP as phosphate donor to produce ADP. Phosphorylates only AMP when using GTP as phosphate donor. In vitro, can also catalyze the phosphorylation of CMP, dAMP and dCMP and use GTP as an alternate phosphate donor. Moreover, exhibits a diphosphate kinase activity, producing ATP, CTP, GTP, UTP, TTP, dATP, dCTP and dGTP from the corresponding diphosphate substrates with either ATP or GTP as phosphate donors. Plays a role in controlling cellular ATP levels by regulating phosphorylation and activation of the energy sensor protein kinase AMPK. Plays a protective role in the cellular response to oxidative stress. The protein is Adenylate kinase 4, mitochondrial of Homo sapiens (Human).